The chain runs to 217 residues: Ribosome maturation factor RimP (217 aa).

It belongs to the RimP family.

The protein resides in the cytoplasm. Required for maturation of 30S ribosomal subunits. The polypeptide is Ribosome maturation factor RimP (Nocardia farcinica (strain IFM 10152)).